The following is a 569-amino-acid chain: Probable protein phosphatase 2C BIPP2C1 (569 aa).

Disordered stretches follow at residues 120–214 and 251–279; these read EVSP…KVTG and SLDDSEASDGSTTQDFDTDVETESSGSSI. The span at 179 to 188 shows a compositional bias: basic and acidic residues; the sequence is ESERGSDADG. Residues 329–564 enclose the PPM-type phosphatase domain; the sequence is AAMLPHPSKV…DDVTVVVSVV (236 aa). D358, G359, D488, and D555 together coordinate Mn(2+).

Belongs to the PP2C family. It depends on Mg(2+) as a cofactor. The cofactor is Mn(2+).

The catalysed reaction is O-phospho-L-seryl-[protein] + H2O = L-seryl-[protein] + phosphate. The enzyme catalyses O-phospho-L-threonyl-[protein] + H2O = L-threonyl-[protein] + phosphate. In terms of biological role, may play a role in responses to biotic and abiotic stresses. This Oryza sativa subsp. japonica (Rice) protein is Probable protein phosphatase 2C BIPP2C1 (BIPP2C1).